Reading from the N-terminus, the 895-residue chain is Endochitinase 2 (895 aa).

A signal peptide spans 1 to 22; that stretch reads MGLTNILAAFIAVSSLFIQSLA. A GH18 domain is found at 29-340; the sequence is SNLAVYWGQG…DIMKEVLLRC (312 aa). N90 is a glycosylation site (N-linked (GlcNAc...) asparagine). Residue E175 is the Proton donor of the active site. The tract at residues 343–712 is disordered; sequence DPPTSTVTST…APSSSTTEDR (370 aa). The span at 346 to 425 shows a compositional bias: low complexity; sequence TSTVTSTISA…ISTRSASTET (80 aa). The segment covering 426 to 478 has biased composition (polar residues); that stretch reads VTTRSQEPPSTTISTRPASTETVTTRSQEPPSSTISTRSASTETVTTRSQEPP. Residues 479 to 505 show a composition bias toward low complexity; it reads SSTISTRSASTETSTSSQDSPSTTIST. Polar residues predominate over residues 506–543; the sequence is KSAPTGTVTTRSQDLPSTTISTRSPETETETVTTKSQD. The span at 544–555 shows a compositional bias: low complexity; the sequence is SPSITLSTRSSS. Positions 556–577 are enriched in polar residues; the sequence is AETVSTRSQHSSSTTISTKSAP. Residues 578 to 589 show a composition bias toward low complexity; the sequence is TETGTTSEHSTS. A compositionally biased stretch (polar residues) spans 590–657; it reads MPVSTRSAST…ISTELPSQTH (68 aa). Low complexity-rich tracts occupy residues 658 to 692 and 699 to 712; these read STTD…APTT and TLTL…TEDR. G866 is lipidated: GPI-anchor amidated glycine. The propeptide at 867–895 is removed in mature form; sequence GAMTVRSMDVVAKALITAGAAVLGLFLGL.

The protein belongs to the glycosyl hydrolase 18 family. Chitinase class III subfamily.

The protein resides in the cell membrane. The catalysed reaction is Random endo-hydrolysis of N-acetyl-beta-D-glucosaminide (1-&gt;4)-beta-linkages in chitin and chitodextrins.. May be associated with endosporulation. The sequence is that of Endochitinase 2 (CTS2) from Coccidioides immitis (strain RS) (Valley fever fungus).